Reading from the N-terminus, the 151-residue chain is uncharacterized protein (151 aa).

The next 4 helical transmembrane spans lie at 8-28, 60-80, 82-102, and 113-133; these read GIGS…EFFE, WHVA…GVLT, FSAL…HADS, and LPLI…GKLS.

This sequence belongs to the DoxX family.

The protein resides in the cell membrane. This is an uncharacterized protein from Haemophilus influenzae (strain ATCC 51907 / DSM 11121 / KW20 / Rd).